The following is a 204-amino-acid chain: Guanylate kinase (204 aa).

A Guanylate kinase-like domain is found at 5-184 (GLLIVLSGPS…AVQRIKDIIA (180 aa)). An ATP-binding site is contributed by 12–19 (GPSGVGKG).

It belongs to the guanylate kinase family.

Its subcellular location is the cytoplasm. The catalysed reaction is GMP + ATP = GDP + ADP. In terms of biological role, essential for recycling GMP and indirectly, cGMP. This is Guanylate kinase from Enterococcus faecalis (strain ATCC 700802 / V583).